The sequence spans 359 residues: 4-hydroxy-3-methylbut-2-en-1-yl diphosphate synthase (flavodoxin) (359 aa).

Residues cysteine 264, cysteine 267, cysteine 299, and glutamate 306 each contribute to the [4Fe-4S] cluster site.

It belongs to the IspG family. It depends on [4Fe-4S] cluster as a cofactor.

The catalysed reaction is (2E)-4-hydroxy-3-methylbut-2-enyl diphosphate + oxidized [flavodoxin] + H2O + 2 H(+) = 2-C-methyl-D-erythritol 2,4-cyclic diphosphate + reduced [flavodoxin]. It participates in isoprenoid biosynthesis; isopentenyl diphosphate biosynthesis via DXP pathway; isopentenyl diphosphate from 1-deoxy-D-xylulose 5-phosphate: step 5/6. Converts 2C-methyl-D-erythritol 2,4-cyclodiphosphate (ME-2,4cPP) into 1-hydroxy-2-methyl-2-(E)-butenyl 4-diphosphate. The polypeptide is 4-hydroxy-3-methylbut-2-en-1-yl diphosphate synthase (flavodoxin) (Helicobacter pylori (strain G27)).